The primary structure comprises 1005 residues: Beta-galactosidase (1005 aa).

Glutamate 455 serves as the catalytic Proton donor. The active-site Nucleophile is the glutamate 526.

The protein belongs to the glycosyl hydrolase 2 family.

The catalysed reaction is Hydrolysis of terminal non-reducing beta-D-galactose residues in beta-D-galactosides.. The sequence is that of Beta-galactosidase (lacZ) from Actinobacillus pleuropneumoniae (Haemophilus pleuropneumoniae).